The sequence spans 95 residues: Protein TusB (95 aa).

It belongs to the DsrH/TusB family. Heterohexamer, formed by a dimer of trimers. The hexameric TusBCD complex contains 2 copies each of TusB, TusC and TusD. The TusBCD complex interacts with TusE.

Its subcellular location is the cytoplasm. Its function is as follows. Part of a sulfur-relay system required for 2-thiolation of 5-methylaminomethyl-2-thiouridine (mnm(5)s(2)U) at tRNA wobble positions. This chain is Protein TusB, found in Cronobacter sakazakii (strain ATCC BAA-894) (Enterobacter sakazakii).